The following is a 475-amino-acid chain: MAKLHITTWGCQMNEYDSSKMADLLNSTHGLELTDKPEEADILLLNTCSIREKAQEKVFSQLGRWKNWKKDKPDLIIGVGGCVASQEGEHIRERAPFVDIVFGPQTLHRLPEMINQIRSGDRAVVDISFPEIEKFDRLPEPKAEGPTAFVSIMEGCNKYCSFCVVPYTRGEEVSRPVDDVLFEIAQLAEQGVREVNLLGQNVNAYRGETFDGGICTFAELLRLVAAIDGIDRLRYTTSHPIEFTDDIIEVYRDTPELVSFLHLPIQSGADRVLTMMKRNHTALEYKAIIRKLRAVRPNIQISSDFIVGFPGETAEDFEQTMKIIEQVNFDMSFSFIYSARPGTPASDLPDDVSENEKKDRLAHLQQRINHQAMQFSRLMLGTEQRILVEGPSKKDIMELTGRTETNRVVNFIGTPNMIGKFVDIKITDVYSNSLRGEVIRTEDQMGLRIVESASSVIARTRKEDDLGVGKYAVNL.

In terms of domain architecture, MTTase N-terminal spans 2-119; the sequence is AKLHITTWGC…LPEMINQIRS (118 aa). Residues Cys-11, Cys-48, Cys-82, Cys-156, Cys-160, and Cys-163 each contribute to the [4Fe-4S] cluster site. The 233-residue stretch at 142 to 374 folds into the Radical SAM core domain; that stretch reads KAEGPTAFVS…QQRINHQAMQ (233 aa). The TRAM domain maps to 377 to 440; it reads RLMLGTEQRI…SNSLRGEVIR (64 aa).

The protein belongs to the methylthiotransferase family. MiaB subfamily. As to quaternary structure, monomer. [4Fe-4S] cluster serves as cofactor.

Its subcellular location is the cytoplasm. The catalysed reaction is N(6)-dimethylallyladenosine(37) in tRNA + (sulfur carrier)-SH + AH2 + 2 S-adenosyl-L-methionine = 2-methylsulfanyl-N(6)-dimethylallyladenosine(37) in tRNA + (sulfur carrier)-H + 5'-deoxyadenosine + L-methionine + A + S-adenosyl-L-homocysteine + 2 H(+). In terms of biological role, catalyzes the methylthiolation of N6-(dimethylallyl)adenosine (i(6)A), leading to the formation of 2-methylthio-N6-(dimethylallyl)adenosine (ms(2)i(6)A) at position 37 in tRNAs that read codons beginning with uridine. This Haemophilus ducreyi (strain 35000HP / ATCC 700724) protein is tRNA-2-methylthio-N(6)-dimethylallyladenosine synthase.